A 164-amino-acid polypeptide reads, in one-letter code: MSDKPDARPSARLSAVTLDDASIGHSSADIDHERATAIWDLIEDNSFAPCGDPGEGPYTLHISLMESRLVLDIKRESGEQVVQHHLSLTPFRKVVKDYFLVCESYYNAIRSASPSQIEAIDMGRRGLHNEGSTLLQERLEGKVDLDFDSARRLFTLICALHWKG.

This sequence belongs to the UPF0262 family.

The polypeptide is UPF0262 protein Xaut_1232 (Xanthobacter autotrophicus (strain ATCC BAA-1158 / Py2)).